The following is a 302-amino-acid chain: Sulfate adenylyltransferase subunit 2 (302 aa).

The protein belongs to the PAPS reductase family. CysD subfamily. As to quaternary structure, heterodimer composed of CysD, the smaller subunit, and CysN.

It carries out the reaction sulfate + ATP + H(+) = adenosine 5'-phosphosulfate + diphosphate. Its pathway is sulfur metabolism; hydrogen sulfide biosynthesis; sulfite from sulfate: step 1/3. Its function is as follows. With CysN forms the ATP sulfurylase (ATPS) that catalyzes the adenylation of sulfate producing adenosine 5'-phosphosulfate (APS) and diphosphate, the first enzymatic step in sulfur assimilation pathway. APS synthesis involves the formation of a high-energy phosphoric-sulfuric acid anhydride bond driven by GTP hydrolysis by CysN coupled to ATP hydrolysis by CysD. This chain is Sulfate adenylyltransferase subunit 2, found in Xanthomonas euvesicatoria pv. vesicatoria (strain 85-10) (Xanthomonas campestris pv. vesicatoria).